Here is a 650-residue protein sequence, read N- to C-terminus: Chaperone protein DnaK (650 aa).

Thr-200 is subject to Phosphothreonine; by autocatalysis. The span at Ala-611 to Ala-636 shows a compositional bias: low complexity. Residues Ala-611 to Asp-650 form a disordered region.

This sequence belongs to the heat shock protein 70 family.

Functionally, acts as a chaperone. This chain is Chaperone protein DnaK, found in Burkholderia mallei (strain NCTC 10247).